We begin with the raw amino-acid sequence, 249 residues long: MSEALLVKVGGSLRGAEALLEELAAYPGPLVLVHGGGPEIGEWLKRLGYESRFVGGLRVTPPEQLEVVEMALYLTGKRLAWGLSRRGRKALALSGRDALCLRGRALPELGRVGEVVGVEVGLLLDLLEKGYTPLLAPIALDEEGPLNVNADTAAGAVAGALGWPAVFLTDVEGVYRNPKDPKTRFPRLTPKEVEALKEEGVIQGGMIPKVEAALAALRAGAPWAAVAKGERGVLRRLLSGEGGTLFSPS.

Residues 36-37, arginine 58, and asparagine 147 each bind substrate; that span reads GG.

The protein belongs to the acetylglutamate kinase family. ArgB subfamily.

It localises to the cytoplasm. The catalysed reaction is N-acetyl-L-glutamate + ATP = N-acetyl-L-glutamyl 5-phosphate + ADP. It participates in amino-acid biosynthesis; L-arginine biosynthesis; N(2)-acetyl-L-ornithine from L-glutamate: step 2/4. Catalyzes the ATP-dependent phosphorylation of N-acetyl-L-glutamate. This Thermus thermophilus (strain ATCC 27634 / DSM 579 / HB8) protein is Acetylglutamate kinase.